We begin with the raw amino-acid sequence, 216 residues long: Maleylacetoacetate isomerase (216 aa).

At Met1 the chain carries N-acetylmethionine. The GST N-terminal domain occupies 4–87; sequence GKPILYSYFR…YLEETRPIPR (84 aa). Residues 14–19 and Gln45 each bind glutathione; that span reads SSCSWR. Lys57 is subject to N6-succinyllysine. Glutathione-binding positions include Val59, 71 to 72, Gln111, and 115 to 117; these read QS and NLS. One can recognise a GST C-terminal domain in the interval 92–212; sequence DPQKRAIVRM…HPRRQPDTPA (121 aa). Thr136 carries the post-translational modification Phosphothreonine. At Ser137 the chain carries Phosphoserine. Lys177 carries the N6-succinyllysine modification. Ser181 bears the Phosphoserine mark.

Belongs to the GST superfamily. Zeta family. As to quaternary structure, homodimer. Glutathione serves as cofactor. In terms of tissue distribution, expressed in liver, kidney, seminal glands and breast.

The protein resides in the cytoplasm. It catalyses the reaction 4-maleylacetoacetate = 4-fumarylacetoacetate. It carries out the reaction RX + glutathione = an S-substituted glutathione + a halide anion + H(+). It functions in the pathway amino-acid degradation; L-phenylalanine degradation; acetoacetate and fumarate from L-phenylalanine: step 5/6. Probable bifunctional enzyme showing minimal glutathione-conjugating activity with ethacrynic acid and 7-chloro-4-nitrobenz-2-oxa-1, 3-diazole and maleylacetoacetate isomerase activity. Also has low glutathione peroxidase activity with t-butyl and cumene hydroperoxides. Is able to catalyze the glutathione dependent oxygenation of dichloroacetic acid to glyoxylic acid. The chain is Maleylacetoacetate isomerase (Gstz1) from Mus musculus (Mouse).